A 984-amino-acid polypeptide reads, in one-letter code: Pro-apoptotic serine protease NMA111 (984 aa).

The segment at 51-241 is serine protease; sequence VVSIQFAQVA…LPLNRGKRAL (191 aa). Active-site charge relay system residues include histidine 89, aspartate 120, and serine 203. 2 consecutive PDZ domains span residues 268–346 and 756–826; these read RRLG…ERNG and PEWI…VRNK.

This sequence belongs to the peptidase S1C family.

The protein resides in the nucleus. In terms of biological role, nuclear serine protease which mediates apoptosis. This chain is Pro-apoptotic serine protease NMA111 (NMA111), found in Yarrowia lipolytica (strain CLIB 122 / E 150) (Yeast).